The sequence spans 365 residues: Alanine racemase (365 aa).

The active-site Proton acceptor; specific for D-alanine is K32. An N6-(pyridoxal phosphate)lysine modification is found at K32. R128 lines the substrate pocket. Residue Y257 is the Proton acceptor; specific for L-alanine of the active site. M305 provides a ligand contact to substrate.

This sequence belongs to the alanine racemase family. It depends on pyridoxal 5'-phosphate as a cofactor.

It carries out the reaction L-alanine = D-alanine. It functions in the pathway amino-acid biosynthesis; D-alanine biosynthesis; D-alanine from L-alanine: step 1/1. Catalyzes the interconversion of L-alanine and D-alanine. May also act on other amino acids. This Francisella tularensis subsp. holarctica (strain LVS) protein is Alanine racemase (alr).